A 592-amino-acid chain; its full sequence is MTVLKLSHWRVLAELADGLPQHVSQLARMADMKPQQLNGFWQQMPAHIRGLLRQHDGYWRLVRPLAVFDAEGLRELGERSGFQTALKHECASSNDEILELARIAPDKAHKTICVTHLQSKGRGRQGRKWSHRLGECLMFSFGWVFDRPQYELGSLSPVAAVACRRALSRLGLDVQIKWPNDLVVGRDKLGGILIETVRTGGKTVAVVGIGINFVLPKEVENAASVQSLFQTASRRGNADAAVLLETLLVELDAVLLQYARDGFAPFVAEYQAANRDHGKAVLLLRDGETVFEGTVKGVDGQGVLHLETAEGKQTVVSGEISLRSDDRPVSVPKRRDSERFLLLDGGNSRLKWAWVENGTFATVGSAPYRDLSPLGAEWAEKADGNVRIVGCAVCGEFKKAQVQEQLARKIEWLPSSAQALGIRNHYRHPEEHGSDRWFNALGSRRFSRNACVVVSCGTAVTVDALTDDGHYLGGTIMPGFHLMKESLAVRTANLNRHAGKRYPFPTTTGNAVASGMMDAVCGSVMMMHGRLKEKTGAGKPVDVIITGGGAAKVAEALPPAFLAENTVRVADNLVIYGLLNMIAAEGREYEHI.

Residues 1 to 329 (MTVLKLSHWR…ISLRSDDRPV (329 aa)) are biotin--protein ligase. The BPL/LPL catalytic domain maps to 83–259 (QTALKHECAS…ELDAVLLQYA (177 aa)). Residues 336-592 (DSERFLLLDG…AAEGREYEHI (257 aa)) form a type III pantothenate kinase region. Position 344-351 (344-351 (DGGNSRLK)) interacts with ATP. Substrate is bound by residues Tyr-426 and 433–436 (GSDR). Asp-435 functions as the Proton acceptor in the catalytic mechanism. Thr-458 serves as a coordination point for ATP. Substrate is bound at residue Thr-508.

In the N-terminal section; belongs to the biotin--protein ligase family. It in the C-terminal section; belongs to the type III pantothenate kinase family. It depends on NH4(+) as a cofactor. K(+) serves as cofactor.

Its subcellular location is the cytoplasm. It catalyses the reaction biotin + L-lysyl-[protein] + ATP = N(6)-biotinyl-L-lysyl-[protein] + AMP + diphosphate + H(+). The enzyme catalyses (R)-pantothenate + ATP = (R)-4'-phosphopantothenate + ADP + H(+). It functions in the pathway cofactor biosynthesis; coenzyme A biosynthesis; CoA from (R)-pantothenate: step 1/5. Activates biotin to form biotinyl-5'-adenylate and transfers the biotin moiety to biotin-accepting proteins. Its function is as follows. Catalyzes the phosphorylation of pantothenate (Pan), the first step in CoA biosynthesis. In Neisseria meningitidis serogroup B (strain ATCC BAA-335 / MC58), this protein is Bifunctional enzyme BirA/CoaX (birA/coaX).